The primary structure comprises 105 residues: Iron-sulfur cluster assembly protein CyaY (105 aa).

This sequence belongs to the frataxin family.

Its function is as follows. Involved in iron-sulfur (Fe-S) cluster assembly. May act as a regulator of Fe-S biogenesis. This chain is Iron-sulfur cluster assembly protein CyaY, found in Chromobacterium violaceum (strain ATCC 12472 / DSM 30191 / JCM 1249 / CCUG 213 / NBRC 12614 / NCIMB 9131 / NCTC 9757 / MK).